A 417-amino-acid chain; its full sequence is Nucleosome assembly protein (417 aa).

Positions 1 to 47 are disordered; sequence MSDPIRTKPKSSMQIDNAPTPHNTPASVLNPSYLKNGNPVRAQAQEQ. Polar residues predominate over residues 10–35; it reads KSSMQIDNAPTPHNTPASVLNPSYLK. Phosphothreonine is present on residues Thr20 and Thr24. Phosphoserine is present on Ser27. Lys50 is covalently cross-linked (Glycyl lysine isopeptide (Lys-Gly) (interchain with G-Cter in ubiquitin)). Thr53 is subject to Phosphothreonine. Phosphoserine is present on residues Ser69, Ser76, Ser82, Ser98, Ser104, and Ser140. Residues 143–362 are interaction with NBA1; the sequence is EQPKPEQIAK…IPRAVDWFTG (220 aa). Ser159 and Ser177 each carry phosphoserine; by CK2. Residues 330–356 constitute a DNA-binding region (H-T-H motif); that stretch reads LEEDLEERLALDYSIGEQLKDKLIPRA. The disordered stretch occupies residues 364-417; the sequence is ALEFEFEEDEEEADEDEDEEEDDDHGLEDDDGESAEEQDDFAGRPEQAPECKQS. Residues 367-403 are compositionally biased toward acidic residues; it reads FEFEEDEEEADEDEDEEEDDDHGLEDDDGESAEEQDD. Position 397 is a phosphoserine; by CK2 (Ser397). The segment covering 404–417 has biased composition (basic and acidic residues); it reads FAGRPEQAPECKQS.

This sequence belongs to the nucleosome assembly protein (NAP) family. As to quaternary structure, component of the GIN4 complex composed of at least BNI5, CDC3, CDC10, CDC11, CDC12, GIN4, NAP1 and SHS1 which forms a ring at the bud neck. Homodimer (in-vitro). Interacts with the B-type cyclin CLB2. Interacts with 60S ribosomal protein L18 (RPL18A or RPL18B), CKA2, CKI1, eukaryotic elongation factor 1 complex eEF1A (TEF1 or TEF2), FOL1, HSC82, HTA2, HTB2, HTZ1, KAP114, KCC4, NIS1, SSA1, SSA2, SSB1, SSC1, SHM1, SIP5 and TCO89. Interacts with NBA1. Interacts with histone H3/H4 heterodimers. Post-translationally, phosphorylation by CK2 is required for normal progression through S phase. CK2 phosphorylation is not required for correct bud formation nor histone binding.

It localises to the cytoplasm. It is found in the nucleus. The protein resides in the bud neck. Acidic protein, which assembles histones into an octamer (in vitro). Involved in the regulation of the localization and the function of the septins during mitosis. Involved in the function of B-type cyclins. The chain is Nucleosome assembly protein from Saccharomyces cerevisiae (strain ATCC 204508 / S288c) (Baker's yeast).